Consider the following 252-residue polypeptide: Protein Flattop homolog (252 aa).

The disordered stretch occupies residues Thr-177–His-252. Basic and acidic residues predominate over residues Pro-218–His-252.

The protein belongs to the Flattop family.

This Drosophila melanogaster (Fruit fly) protein is Protein Flattop homolog.